We begin with the raw amino-acid sequence, 474 residues long: Na(+)/H(+) antiporter NhaA 3 (474 aa).

11 consecutive transmembrane segments (helical) span residues 31–51, 73–93, 110–130, 141–161, 171–191, 194–214, 220–240, 280–300, 309–329, 347–367, and 378–398; these read VGGVLLLVAAIAALVWANIPA, LSVAHWAADGLLAIFFFVAGI, AALPVVAALCGMVVPAVVYTV, GWAVPTATDIAFALAVLAVIG, FLLTLAVVDDLFAILIIAVFF, TLNFAALGGAVVGLAVFWLLL, GWYVYVPLGLVIWALMYNSGV, LAVPLFALFSAGVAITGGALA, LGVVLGLVVGKTLGIFGGTWL, VFAVATLAGIGFTVSLLIGEL, and EVKAAVLTGSLIAAALATVLL.

This sequence belongs to the NhaA Na(+)/H(+) (TC 2.A.33) antiporter family.

Its subcellular location is the cell membrane. The catalysed reaction is Na(+)(in) + 2 H(+)(out) = Na(+)(out) + 2 H(+)(in). In terms of biological role, na(+)/H(+) antiporter that extrudes sodium in exchange for external protons. The chain is Na(+)/H(+) antiporter NhaA 3 from Streptomyces coelicolor (strain ATCC BAA-471 / A3(2) / M145).